The sequence spans 146 residues: Hemoglobin subunit beta (146 aa).

A Globin domain is found at 2 to 146; it reads HWTAEEKQLI…VAHALARKYH (145 aa). Heme b-binding residues include His63 and His92.

It belongs to the globin family. In terms of assembly, heterotetramer of two alpha chains and two beta chains. Red blood cells.

Involved in oxygen transport from the lung to the various peripheral tissues. This Chloephaga melanoptera (Andean goose) protein is Hemoglobin subunit beta (HBB).